Reading from the N-terminus, the 88-residue chain is Toxin RelE2 (88 aa).

Belongs to the RelE toxin family.

In terms of biological role, toxic component of a type II toxin-antitoxin (TA) system. Its toxic effect is neutralized by coexpression with cognate antitoxin RelB2 but no other ParD or RelB antitoxin. This is Toxin RelE2 (relE2) from Caulobacter vibrioides (strain ATCC 19089 / CIP 103742 / CB 15) (Caulobacter crescentus).